Here is a 155-residue protein sequence, read N- to C-terminus: Transcriptional repressor NrdR (155 aa).

Residues 3 to 34 fold into a zinc finger; the sequence is CPYCQNADTRVVDSRLIGEGEQVRRRRQCPSC. Positions 49–139 constitute an ATP-cone domain; the sequence is PRVVKSDGRR…VYRRFEDVGA (91 aa).

Belongs to the NrdR family. Requires Zn(2+) as cofactor.

Functionally, negatively regulates transcription of bacterial ribonucleotide reductase nrd genes and operons by binding to NrdR-boxes. The chain is Transcriptional repressor NrdR from Halorhodospira halophila (strain DSM 244 / SL1) (Ectothiorhodospira halophila (strain DSM 244 / SL1)).